A 314-amino-acid chain; its full sequence is Methionyl-tRNA formyltransferase (314 aa).

Serine 113–proline 116 serves as a coordination point for (6S)-5,6,7,8-tetrahydrofolate.

This sequence belongs to the Fmt family.

The enzyme catalyses L-methionyl-tRNA(fMet) + (6R)-10-formyltetrahydrofolate = N-formyl-L-methionyl-tRNA(fMet) + (6S)-5,6,7,8-tetrahydrofolate + H(+). Functionally, attaches a formyl group to the free amino group of methionyl-tRNA(fMet). The formyl group appears to play a dual role in the initiator identity of N-formylmethionyl-tRNA by promoting its recognition by IF2 and preventing the misappropriation of this tRNA by the elongation apparatus. This Pseudomonas aeruginosa (strain UCBPP-PA14) protein is Methionyl-tRNA formyltransferase.